The following is a 364-amino-acid chain: 4-hydroxythreonine-4-phosphate dehydrogenase (364 aa).

Substrate is bound by residues His138 and Thr139. His169, His214, and His269 together coordinate a divalent metal cation. Positions 277, 286, and 295 each coordinate substrate.

The protein belongs to the PdxA family. In terms of assembly, homodimer. A divalent metal cation is required as a cofactor.

It is found in the cytoplasm. It catalyses the reaction 4-(phosphooxy)-L-threonine + NAD(+) = 3-amino-2-oxopropyl phosphate + CO2 + NADH. Its pathway is cofactor biosynthesis; pyridoxine 5'-phosphate biosynthesis; pyridoxine 5'-phosphate from D-erythrose 4-phosphate: step 4/5. Functionally, catalyzes the NAD(P)-dependent oxidation of 4-(phosphooxy)-L-threonine (HTP) into 2-amino-3-oxo-4-(phosphooxy)butyric acid which spontaneously decarboxylates to form 3-amino-2-oxopropyl phosphate (AHAP). This Bacteroides thetaiotaomicron (strain ATCC 29148 / DSM 2079 / JCM 5827 / CCUG 10774 / NCTC 10582 / VPI-5482 / E50) protein is 4-hydroxythreonine-4-phosphate dehydrogenase.